The sequence spans 550 residues: CTP synthase (550 aa).

The segment at 1–270 (MTKFVFVTGG…DRLICEELRL (270 aa)) is amidoligase domain. Residue serine 13 participates in CTP binding. UTP is bound at residue serine 13. ATP-binding positions include 14-19 (SLGKGI) and aspartate 71. Positions 71 and 144 each coordinate Mg(2+). CTP contacts are provided by residues 151–153 (DIE), 191–196 (KTKPTQ), and lysine 227. Residues 191–196 (KTKPTQ) and lysine 227 each bind UTP. The 253-residue stretch at 295 to 547 (TIGMVGKYVD…VEAALASQQR (253 aa)) folds into the Glutamine amidotransferase type-1 domain. Glycine 356 lines the L-glutamine pocket. Cysteine 383 serves as the catalytic Nucleophile; for glutamine hydrolysis. L-glutamine is bound by residues 384–387 (LGMQ), glutamate 407, and arginine 473. Catalysis depends on residues histidine 520 and glutamate 522.

The protein belongs to the CTP synthase family. As to quaternary structure, homotetramer.

The catalysed reaction is UTP + L-glutamine + ATP + H2O = CTP + L-glutamate + ADP + phosphate + 2 H(+). It carries out the reaction L-glutamine + H2O = L-glutamate + NH4(+). The enzyme catalyses UTP + NH4(+) + ATP = CTP + ADP + phosphate + 2 H(+). It participates in pyrimidine metabolism; CTP biosynthesis via de novo pathway; CTP from UDP: step 2/2. Its activity is regulated as follows. Allosterically activated by GTP, when glutamine is the substrate; GTP has no effect on the reaction when ammonia is the substrate. The allosteric effector GTP functions by stabilizing the protein conformation that binds the tetrahedral intermediate(s) formed during glutamine hydrolysis. Inhibited by the product CTP, via allosteric rather than competitive inhibition. Functionally, catalyzes the ATP-dependent amination of UTP to CTP with either L-glutamine or ammonia as the source of nitrogen. Regulates intracellular CTP levels through interactions with the four ribonucleotide triphosphates. This chain is CTP synthase, found in Cupriavidus taiwanensis (strain DSM 17343 / BCRC 17206 / CCUG 44338 / CIP 107171 / LMG 19424 / R1) (Ralstonia taiwanensis (strain LMG 19424)).